We begin with the raw amino-acid sequence, 245 residues long: MMKIKRFVYSLPEEEFYELVYSQNLSVEVLERKEIEVIFASYKEIEGLTPEKVEEVKEDWENWKEKFKPIEVEDFVIIPSWKKPVIVKPGLAFGTGLHPTTQLCIKALKKYLKEGMTVLDVGTGSGILAIVSALLGAKRVVGIDIDEKAVNECRENAELNKVKVECFRAEPKDVNESFDLVVANLEIHIFERVLKDILPKFKKIGIFSGLYKEKDLKRFEELLGGLKVKEVFEKENWYAVVVEKG.

Residues threonine 101, glycine 122, aspartate 144, and asparagine 184 each coordinate S-adenosyl-L-methionine.

The protein belongs to the methyltransferase superfamily. PrmA family.

Its subcellular location is the cytoplasm. The enzyme catalyses L-lysyl-[protein] + 3 S-adenosyl-L-methionine = N(6),N(6),N(6)-trimethyl-L-lysyl-[protein] + 3 S-adenosyl-L-homocysteine + 3 H(+). Its function is as follows. Methylates ribosomal protein L11. This is Ribosomal protein L11 methyltransferase from Aquifex aeolicus (strain VF5).